The following is a 529-amino-acid chain: tRNA-2-methylthio-N(6)-dimethylallyladenosine synthase (529 aa).

Positions Arg-18 to His-134 constitute an MTTase N-terminal domain. Cys-27, Cys-63, Cys-97, Cys-171, Cys-175, and Cys-178 together coordinate [4Fe-4S] cluster. One can recognise a Radical SAM core domain in the interval Arg-157–Glu-404. Residues Gln-407–Leu-486 form the TRAM domain.

This sequence belongs to the methylthiotransferase family. MiaB subfamily. Monomer. Requires [4Fe-4S] cluster as cofactor.

The protein resides in the cytoplasm. The enzyme catalyses N(6)-dimethylallyladenosine(37) in tRNA + (sulfur carrier)-SH + AH2 + 2 S-adenosyl-L-methionine = 2-methylsulfanyl-N(6)-dimethylallyladenosine(37) in tRNA + (sulfur carrier)-H + 5'-deoxyadenosine + L-methionine + A + S-adenosyl-L-homocysteine + 2 H(+). In terms of biological role, catalyzes the methylthiolation of N6-(dimethylallyl)adenosine (i(6)A), leading to the formation of 2-methylthio-N6-(dimethylallyl)adenosine (ms(2)i(6)A) at position 37 in tRNAs that read codons beginning with uridine. The polypeptide is tRNA-2-methylthio-N(6)-dimethylallyladenosine synthase (Mycobacterium sp. (strain KMS)).